The sequence spans 208 residues: Uracil phosphoribosyltransferase (208 aa).

Residues arginine 78, arginine 103, and 130 to 138 contribute to the 5-phospho-alpha-D-ribose 1-diphosphate site; that span reads DPMLATGGS. Residues isoleucine 193 and 198–200 contribute to the uracil site; that span reads GDA. Residue aspartate 199 participates in 5-phospho-alpha-D-ribose 1-diphosphate binding.

Belongs to the UPRTase family. Requires Mg(2+) as cofactor.

It catalyses the reaction UMP + diphosphate = 5-phospho-alpha-D-ribose 1-diphosphate + uracil. The protein operates within pyrimidine metabolism; UMP biosynthesis via salvage pathway; UMP from uracil: step 1/1. Allosterically activated by GTP. Functionally, catalyzes the conversion of uracil and 5-phospho-alpha-D-ribose 1-diphosphate (PRPP) to UMP and diphosphate. The polypeptide is Uracil phosphoribosyltransferase (Shewanella halifaxensis (strain HAW-EB4)).